The sequence spans 804 residues: Leucine--tRNA ligase (804 aa).

Residues proline 39–histidine 50 carry the 'HIGH' region motif. The 'KMSKS' region motif lies at lysine 573 to serine 577. Lysine 576 contributes to the ATP binding site.

It belongs to the class-I aminoacyl-tRNA synthetase family.

The protein localises to the cytoplasm. The catalysed reaction is tRNA(Leu) + L-leucine + ATP = L-leucyl-tRNA(Leu) + AMP + diphosphate. This chain is Leucine--tRNA ligase, found in Lactobacillus delbrueckii subsp. bulgaricus (strain ATCC 11842 / DSM 20081 / BCRC 10696 / JCM 1002 / NBRC 13953 / NCIMB 11778 / NCTC 12712 / WDCM 00102 / Lb 14).